The chain runs to 1478 residues: DNA-directed RNA polymerase subunit beta' (1478 aa).

3 residues coordinate Mg(2+): aspartate 535, aspartate 537, and aspartate 539. Cysteine 1034, cysteine 1109, cysteine 1116, and cysteine 1119 together coordinate Zn(2+).

The protein belongs to the RNA polymerase beta' chain family. As to quaternary structure, the RNAP catalytic core consists of 2 alpha, 1 beta, 1 beta' and 1 omega subunit. When a sigma factor is associated with the core the holoenzyme is formed, which can initiate transcription. It depends on Mg(2+) as a cofactor. Zn(2+) serves as cofactor.

It catalyses the reaction RNA(n) + a ribonucleoside 5'-triphosphate = RNA(n+1) + diphosphate. Its function is as follows. DNA-dependent RNA polymerase catalyzes the transcription of DNA into RNA using the four ribonucleoside triphosphates as substrates. The protein is DNA-directed RNA polymerase subunit beta' of Mycoplasmopsis agalactiae (strain NCTC 10123 / CIP 59.7 / PG2) (Mycoplasma agalactiae).